A 125-amino-acid chain; its full sequence is MPTLNQLIRHGREEKRRTDRTRASDQCPQKQGVRPRVPTRTPKKPNSAPRKIAKVRLSNRHDIFAHIPGEGHNSQEHPMVLIRGGRVKDSPGVKSHRIRGVKDLLGIPNRRRGRSKYGAERPKSI.

2 disordered regions span residues 1–50 (MPTL…SAPR) and 106–125 (GIPN…PKSI). A compositionally biased stretch (basic and acidic residues) spans 10–23 (HGREEKRRTDRTRA).

Belongs to the universal ribosomal protein uS12 family.

The protein resides in the mitochondrion. Protein S12 is involved in the translation initiation step. The polypeptide is Small ribosomal subunit protein uS12m (RPS12) (Magnolia soulangeana (Saucer magnolia)).